The sequence spans 123 residues: Large ribosomal subunit protein bL20 (123 aa).

The protein belongs to the bacterial ribosomal protein bL20 family.

In terms of biological role, binds directly to 23S ribosomal RNA and is necessary for the in vitro assembly process of the 50S ribosomal subunit. It is not involved in the protein synthesizing functions of that subunit. In Ehrlichia ruminantium (strain Gardel), this protein is Large ribosomal subunit protein bL20.